We begin with the raw amino-acid sequence, 830 residues long: C-Jun-amino-terminal kinase-interacting protein 2 (830 aa).

Disordered regions lie at residues 1-26 (MADR…PPQD), 44-354 (CGLG…ADSP), 367-438 (EGSS…PGPC), 452-504 (LWAT…GSTA), and 539-574 (GNDS…PDSP). Positions 77–105 (DFQEFEMIDDNEEEDDEEEEEEEEEEEDG) are enriched in acidic residues. The interval 111–278 (AGGGPGSQAL…RMISSISETE (168 aa)) is JNK-binding domain (JBD). Residues 142-172 (LHLTTLGAQDSLNNNNGGFTSAPPSSWQETV) are compositionally biased toward polar residues. Low complexity-rich tracts occupy residues 176–190 (PAQE…PLLP) and 218–227 (ASSGGASPSS). Positions 233 to 249 (ADLRSHSSGGHEGRRSS) are enriched in basic and acidic residues. The segment at 242-504 (GHEGRRSSQE…PGSRTTGSTA (263 aa)) is necessary for interaction with FGF13. S257, S304, and S307 each carry phosphoserine. The segment covering 271–307 (ISSISETELELSSDGGSSSGRSSHLTNSIEEASSPAS) has biased composition (low complexity). A compositionally biased stretch (acidic residues) spans 333–352 (TNSEYESGSESEPDLSEDAD). The segment covering 427–437 (APRLGPAQPGP) has biased composition (low complexity). Acidic residues-rich tracts occupy residues 471-490 (SEEE…DAED) and 541-555 (DSEE…EEEA). The SH3 domain occupies 610-671 (EREQTHRAVF…PAFYAHAVPG (62 aa)). Residues 683–819 (PCWVDRFDVQ…FLEYYQEHLA (137 aa)) form the PID domain.

It belongs to the JIP scaffold family. Forms homo- or heterooligomeric complexes. Binds specific components of the JNK signaling pathway namely JNK1, JNK2, JNK3, MAP2K7, MAP3K10, MAP3K11, MAP3K12 and MAPK13. Also binds the proline-rich domain-containing splice variant of apolipoprotein E receptor 2 (ApoER2). Binds the TPR motif-containing C-terminal of kinesin light chain. Binds the cytoplasmic tails of LRP1 and LRP2 (Megalin). Interacts with DCLK2. Interacts with FGF13; enables the interaction with MAPK13 and may regulate the MAPK8IP2 scaffolding activity. Interacts with TIAM1 and TIAM2. Interacts with SH3RF2. In terms of tissue distribution, highly expressed in brain. Expressed in all neurons. Also expressed in testis, primarily in the epididymal epidermis.

Its subcellular location is the cytoplasm. Functionally, the JNK-interacting protein (JIP) group of scaffold proteins selectively mediates JNK signaling by aggregating specific components of the MAPK cascade to form a functional JNK signaling module. JIP2 inhibits IL1 beta-induced apoptosis in insulin-secreting cells. The sequence is that of C-Jun-amino-terminal kinase-interacting protein 2 (Mapk8ip2) from Mus musculus (Mouse).